The primary structure comprises 210 residues: Thymidylate kinase (210 aa).

An ATP-binding site is contributed by 10 to 17 (GPEGAGKS).

It belongs to the thymidylate kinase family.

The enzyme catalyses dTMP + ATP = dTDP + ADP. Functionally, phosphorylation of dTMP to form dTDP in both de novo and salvage pathways of dTTP synthesis. The protein is Thymidylate kinase of Pseudomonas savastanoi pv. phaseolicola (strain 1448A / Race 6) (Pseudomonas syringae pv. phaseolicola (strain 1448A / Race 6)).